The primary structure comprises 72 residues: uncharacterized protein (72 aa).

Helical transmembrane passes span 15-35 (WEILVYILVVGFGFALFIGSI) and 50-70 (ILIYVSCKFVFLIWISLMYFI).

It is found in the host membrane. This is an uncharacterized protein from Spiroplasma melliferum (SpV1).